The sequence spans 122 residues: Large ribosomal subunit protein uL14 (122 aa).

It belongs to the universal ribosomal protein uL14 family. As to quaternary structure, part of the 50S ribosomal subunit. Forms a cluster with proteins L3 and L19. In the 70S ribosome, L14 and L19 interact and together make contacts with the 16S rRNA in bridges B5 and B8.

Its function is as follows. Binds to 23S rRNA. Forms part of two intersubunit bridges in the 70S ribosome. The sequence is that of Large ribosomal subunit protein uL14 from Brucella anthropi (strain ATCC 49188 / DSM 6882 / CCUG 24695 / JCM 21032 / LMG 3331 / NBRC 15819 / NCTC 12168 / Alc 37) (Ochrobactrum anthropi).